The chain runs to 362 residues: MAQIFNFSSGPAMLPAEVLEQAQQELRDWNGLGTSVMEVSHRGKEFIQVAEEAEKDFRDLLNVPSNYKVLFCHGGGRGQFAAVPLNILGDKTTADYVDAGYWAASAIKEAKKYCTPNVFDAKVTVDGLRAVKPMSEWQLSDNAAYMHYCPNETIDGIAIDETPDFGKDVVVAADFSSTILSRPIDVSRYGVIYAGAQKNIGPAGLTIVIVREDLLGKANIACPSILDYSILNDNDSMFNTPPTFAWYLSGLVFKWLKANGGVAAMDKINQQKAELLYGVIDNSDFYRNDVAKANRSRMNVPFQLADSALDKLFLEESFAAGLHALKGHRVVGGMRASIYNAMPLEGVKALTDFMVEFERRHG.

Residues Ser-9 and Arg-42 each coordinate L-glutamate. Pyridoxal 5'-phosphate-binding positions include 76–77, Trp-102, Thr-153, Asp-174, and Gln-197; that span reads GR. Residue Lys-198 is modified to N6-(pyridoxal phosphate)lysine. Pyridoxal 5'-phosphate is bound at residue 239–240; that stretch reads NT.

This sequence belongs to the class-V pyridoxal-phosphate-dependent aminotransferase family. SerC subfamily. In terms of assembly, homodimer. Requires pyridoxal 5'-phosphate as cofactor.

The protein resides in the cytoplasm. The catalysed reaction is O-phospho-L-serine + 2-oxoglutarate = 3-phosphooxypyruvate + L-glutamate. The enzyme catalyses 4-(phosphooxy)-L-threonine + 2-oxoglutarate = (R)-3-hydroxy-2-oxo-4-phosphooxybutanoate + L-glutamate. Its pathway is amino-acid biosynthesis; L-serine biosynthesis; L-serine from 3-phospho-D-glycerate: step 2/3. It functions in the pathway cofactor biosynthesis; pyridoxine 5'-phosphate biosynthesis; pyridoxine 5'-phosphate from D-erythrose 4-phosphate: step 3/5. Its function is as follows. Catalyzes the reversible conversion of 3-phosphohydroxypyruvate to phosphoserine and of 3-hydroxy-2-oxo-4-phosphonooxybutanoate to phosphohydroxythreonine. This Escherichia coli O1:K1 / APEC protein is Phosphoserine aminotransferase.